The following is a 299-amino-acid chain: Phosphoribosylaminoimidazole-succinocarboxamide synthase (299 aa).

This sequence belongs to the SAICAR synthetase family.

It catalyses the reaction 5-amino-1-(5-phospho-D-ribosyl)imidazole-4-carboxylate + L-aspartate + ATP = (2S)-2-[5-amino-1-(5-phospho-beta-D-ribosyl)imidazole-4-carboxamido]succinate + ADP + phosphate + 2 H(+). It participates in purine metabolism; IMP biosynthesis via de novo pathway; 5-amino-1-(5-phospho-D-ribosyl)imidazole-4-carboxamide from 5-amino-1-(5-phospho-D-ribosyl)imidazole-4-carboxylate: step 1/2. The sequence is that of Phosphoribosylaminoimidazole-succinocarboxamide synthase (ade7) from Schizosaccharomyces pombe (strain 972 / ATCC 24843) (Fission yeast).